The following is a 554-amino-acid chain: MQFDYIIIGAGSAGNVLATRLTEDPNTTVLLLEAGGPDYRFDFRTQMPAALAYPLQGKRYNWAYETEPEPYMNNRRMECGRGKGLGGSSLINGMCYIRGNAMDLDNWAKEPGLEHWSYLDCLPYYRKAETRDIGPNDYHGGDGPVSVTTPKPGNNPLFEAMVEAGVQAGYPRTDDLNGYQQEGFGPMDRTVTPQGRRASTARGYLDQARGRPNLTIRTHALTDHIIFAGKRAVGVEWLEGESTIPSKATANKEVLLCAGAIASPQILQRSGVGNPELLRQFDIPVVHDLPGVGENLQDHLEMYLQYECKEPVSLYPALQWWNQPKIGAEWLFGGTGIGASNQFEAGGFIRSRAEFAWPNIQYHFLPVAINYNGSNAVKEHGFQCHVGSMRSPSRGHVRLKSRDPHAHPAILFNYMSHEQDWQEFRDAIRITREIMNQPALDKYRGREISPGIECQSDAELDEFVRNHAETAFHPCGTCKMGYDEMAVVDGEGRVHGLEGLRVVDASIMPQIITGNLNATTIMIGEKMADAIRGRQPLPRSTATYYVAGDAPVRR.

Residue 4 to 33 coordinates FAD; that stretch reads DYIIIGAGSAGNVLATRLTEDPNTTVLLLE. Catalysis depends on His473, which acts as the Proton acceptor.

This sequence belongs to the GMC oxidoreductase family. FAD serves as cofactor.

It carries out the reaction choline + A = betaine aldehyde + AH2. It catalyses the reaction betaine aldehyde + NAD(+) + H2O = glycine betaine + NADH + 2 H(+). It functions in the pathway amine and polyamine biosynthesis; betaine biosynthesis via choline pathway; betaine aldehyde from choline (cytochrome c reductase route): step 1/1. Functionally, involved in the biosynthesis of the osmoprotectant glycine betaine. Catalyzes the oxidation of choline to betaine aldehyde and betaine aldehyde to glycine betaine at the same rate. In Klebsiella pneumoniae subsp. pneumoniae (strain ATCC 700721 / MGH 78578), this protein is Oxygen-dependent choline dehydrogenase.